The sequence spans 117 residues: Large ribosomal subunit protein uL18 (117 aa).

It belongs to the universal ribosomal protein uL18 family. In terms of assembly, part of the 50S ribosomal subunit; part of the 5S rRNA/L5/L18/L25 subcomplex. Contacts the 5S and 23S rRNAs.

This is one of the proteins that bind and probably mediate the attachment of the 5S RNA into the large ribosomal subunit, where it forms part of the central protuberance. The protein is Large ribosomal subunit protein uL18 of Klebsiella pneumoniae subsp. pneumoniae (strain ATCC 700721 / MGH 78578).